Consider the following 514-residue polypeptide: GMP synthase [glutamine-hydrolyzing] (514 aa).

The Glutamine amidotransferase type-1 domain occupies 9 to 199 (MILVLDFGGQ…LFEVCQCTGD (191 aa)). The active-site Nucleophile is the Cys86. Active-site residues include His173 and Glu175. Positions 200–389 (WSMENFIEIE…LGLSDEIVWR (190 aa)) constitute a GMPS ATP-PPase domain. ATP is bound at residue 227-233 (SGGVDSS).

Homodimer.

The catalysed reaction is XMP + L-glutamine + ATP + H2O = GMP + L-glutamate + AMP + diphosphate + 2 H(+). Its pathway is purine metabolism; GMP biosynthesis; GMP from XMP (L-Gln route): step 1/1. In terms of biological role, catalyzes the synthesis of GMP from XMP. The chain is GMP synthase [glutamine-hydrolyzing] from Exiguobacterium sibiricum (strain DSM 17290 / CCUG 55495 / CIP 109462 / JCM 13490 / 255-15).